The sequence spans 227 residues: Germin-like protein 3-3 (227 aa).

Positions methionine 1–alanine 26 are cleaved as a signal peptide. Cysteine 36 and cysteine 51 are joined by a disulfide. Residues serine 65–glutamate 217 enclose the Cupin type-1 domain. Asparagine 78 and asparagine 81 each carry an N-linked (GlcNAc...) asparagine glycan. 4 residues coordinate Mn(2+): histidine 114, histidine 116, glutamate 121, and histidine 163.

Belongs to the germin family. In terms of assembly, oligomer (believed to be a pentamer but probably hexamer).

Its subcellular location is the secreted. It localises to the extracellular space. The protein localises to the apoplast. May play a role in plant defense. Probably has no oxalate oxidase activity even if the active site is conserved. This Oryza sativa subsp. japonica (Rice) protein is Germin-like protein 3-3.